The primary structure comprises 817 residues: ABC transporter G family member STR (817 aa).

The interval 1 to 30 (MARLERDGTNKSLESLMDSHKPGGTTTNLN) is disordered. The Cytoplasmic portion of the chain corresponds to 1–542 (MARLERDGTN…RTVLNVIRTP (542 aa)). Residues 43–294 (LEFTNLSYSI…LSGFGRPVPD (252 aa)) enclose the ABC transporter domain. 87–94 (GPSGAGKS) contacts ATP. Disordered stretches follow at residues 321–349 (QYQH…RRNT), 362–395 (GFTA…LERR), and 439–463 (RPPS…GPRS). Over residues 362–375 (GFTAGTPQPDSSQF) the composition is skewed to polar residues. Positions 377 to 388 (LDDDDNDDDENF) are enriched in acidic residues. The helical transmembrane segment at 543–563 (ELFASREIVLTVMALVLSTIF) threads the bilayer. Topologically, residues 564–579 (KNLGDTTFIDINRLLN) are extracellular. Residues 580–600 (FYIFAVCLVFFSSNDAVPSFI) form a helical membrane-spanning segment. The Cytoplasmic portion of the chain corresponds to 601 to 621 (MERFIFIRETSHNAYRASSYV). Residues 622–642 (ISSLIVYLPFFAVQGLTFAVI) traverse the membrane as a helical segment. Topologically, residues 643-657 (TKLMLHLKSNLFNFW) are extracellular. Residues 658–678 (MILFASLITTNAYVMLVSALV) form a helical membrane-spanning segment. The Cytoplasmic segment spans residues 679-681 (PSY). Residues 682–702 (ITGYAVVIATTALFFLTCGFF) form a helical membrane-spanning segment. Topologically, residues 703–787 (LKRTQIPAYW…TMDITMESLW (85 aa)) are extracellular. Asparagine 762 is a glycosylation site (N-linked (GlcNAc...) asparagine). A helical membrane pass occupies residues 788 to 808 (YDILILLAWGVLYRFFFYLVL). Over 809–817 (RFYSKNERK) the chain is Cytoplasmic.

It belongs to the ABC transporter superfamily. ABCG family. Stunted arbuscule (STR) subfamily. Heterodimerizes with STR2; the resulting transporter is located in the peri-arbuscular membrane. Expressed constitutively in the vascular tissue of roots.

Its subcellular location is the cell membrane. Functionally, together with STR2, required for arbuscule development in arbuscular mycorrhizal (AM) symbiosis. The sequence is that of ABC transporter G family member STR from Medicago truncatula (Barrel medic).